Reading from the N-terminus, the 76-residue chain is Small ribosomal subunit protein bS21C (76 aa).

The segment at 52 to 76 (GRQRKLARKQMQREGLLPTKPRKDK) is disordered.

The protein belongs to the bacterial ribosomal protein bS21 family.

The sequence is that of Small ribosomal subunit protein bS21C (rpsU3) from Agrobacterium fabrum (strain C58 / ATCC 33970) (Agrobacterium tumefaciens (strain C58)).